A 331-amino-acid chain; its full sequence is Biotin synthase (331 aa).

Positions 53–272 (NHVETASLLS…LATARVMMPR (220 aa)) constitute a Radical SAM core domain. [4Fe-4S] cluster-binding residues include Cys-68, Cys-72, and Cys-75. Positions 112, 143, 203, and 276 each coordinate [2Fe-2S] cluster.

This sequence belongs to the radical SAM superfamily. Biotin synthase family. As to quaternary structure, homodimer. [4Fe-4S] cluster serves as cofactor. [2Fe-2S] cluster is required as a cofactor.

The catalysed reaction is (4R,5S)-dethiobiotin + (sulfur carrier)-SH + 2 reduced [2Fe-2S]-[ferredoxin] + 2 S-adenosyl-L-methionine = (sulfur carrier)-H + biotin + 2 5'-deoxyadenosine + 2 L-methionine + 2 oxidized [2Fe-2S]-[ferredoxin]. The protein operates within cofactor biosynthesis; biotin biosynthesis; biotin from 7,8-diaminononanoate: step 2/2. Its function is as follows. Catalyzes the conversion of dethiobiotin (DTB) to biotin by the insertion of a sulfur atom into dethiobiotin via a radical-based mechanism. This is Biotin synthase from Bradyrhizobium diazoefficiens (strain JCM 10833 / BCRC 13528 / IAM 13628 / NBRC 14792 / USDA 110).